The chain runs to 662 residues: Polyunsaturated fatty acid (12S)/(13S)-lipoxygenase, epidermal-type (662 aa).

The region spanning 2 to 114 is the PLAT domain; it reads VKYKILVATG…TICLTEGTAL (113 aa). The Lipoxygenase domain maps to 115-662; that stretch reads KVTDDTQNLF…PSLVENSVTI (548 aa). His360, His365, His540, and Ile662 together coordinate Fe cation.

It belongs to the lipoxygenase family. The cofactor is Fe cation. In terms of tissue distribution, expressed in epidermis.

It is found in the cytoplasm. It catalyses the reaction (5Z,8Z,11Z,14Z)-eicosatetraenoate + O2 = (12S)-hydroperoxy-(5Z,8Z,10E,14Z)-eicosatetraenoate. The enzyme catalyses 1-O-methyl-(9Z,12Z)-octadecadienoate + O2 = 1-O-methyl-(13S)-hydroperoxy-(9Z,11E)-octadecadienoate. It carries out the reaction (8Z,11Z,14Z)-eicosatrienoate + O2 = (12S)-hydroperoxy-(8Z,10E,14Z)-eicosatrienoate. The catalysed reaction is (5Z,8Z,11Z)-eicosatrienoate + O2 = (12S)-hydroperoxy-(5Z,8Z,10E)-eicosatrienoate. It catalyses the reaction 1-O-methyl-(5Z,8Z,11Z,14Z)-eicosatetraenoate + O2 = 1-O-methyl-(12S)-hydroperoxy-(5Z,8Z,10E,14Z)-eicosatetraenoate. The enzyme catalyses (9Z,12Z)-octadecadienoate + O2 = (13S)-hydroperoxy-(9Z,11E)-octadecadienoate. It carries out the reaction (4Z,7Z,10Z,13Z,16Z,19Z)-docosahexaenoate + O2 = (14S)-hydroperoxy-(4Z,7Z,10Z,12E,16Z,19Z)-docosahexaenoate. It functions in the pathway lipid metabolism; hydroperoxy eicosatetraenoic acid biosynthesis. Arachidonate 12-lipoxygenase activity is decreased when the pH decreases from 7.4 to 6.0. Its function is as follows. Catalyzes the regio and stereo-specific incorporation of a single molecule of dioxygen into free and esterified polyunsaturated fatty acids generating lipid hydroperoxides that can be further reduced to the corresponding hydroxy species. Shows increasing catalytic activity within the series arachidonic acid &lt; 5,8,11-eicosatrienoic acid &lt; linoleic acid &lt; 8,11,14-eicosatrienoic acid. The polypeptide is Polyunsaturated fatty acid (12S)/(13S)-lipoxygenase, epidermal-type (Mus musculus (Mouse)).